A 289-amino-acid polypeptide reads, in one-letter code: Acetylglutamate kinase (289 aa).

Residues 60–61 (GG), Arg82, and Asn186 each bind substrate.

Belongs to the acetylglutamate kinase family. ArgB subfamily.

The protein localises to the cytoplasm. It catalyses the reaction N-acetyl-L-glutamate + ATP = N-acetyl-L-glutamyl 5-phosphate + ADP. The protein operates within amino-acid biosynthesis; L-arginine biosynthesis; N(2)-acetyl-L-ornithine from L-glutamate: step 2/4. Catalyzes the ATP-dependent phosphorylation of N-acetyl-L-glutamate. This chain is Acetylglutamate kinase, found in Methanoculleus marisnigri (strain ATCC 35101 / DSM 1498 / JR1).